The sequence spans 388 residues: Flap endonuclease 1 (388 aa).

Residues 1 to 104 form an N-domain region; that stretch reads MGILGLSKLI…GELAKRAERR (104 aa). A Mg(2+)-binding site is contributed by Asp-34. Residues Arg-47 and Arg-70 each contribute to the DNA site. Residues Asp-86, Glu-158, Glu-160, Asp-179, and Asp-181 each coordinate Mg(2+). The tract at residues 122–253 is I-domain; it reads QIEKFNRRLV…KRAIELIKSY (132 aa). Glu-158 contacts DNA. Residues Gly-231 and Asp-233 each coordinate DNA. Asp-233 serves as a coordination point for Mg(2+). The segment at 336–344 is interaction with PCNA; sequence TQVRLDSFF. The disordered stretch occupies residues 355 to 388; it reads AAAKRKAEESKKSANSKKAKIGGGSGAGRGRRPK.

It belongs to the XPG/RAD2 endonuclease family. FEN1 subfamily. Interacts with PCNA. Three molecules of FEN1 bind to one PCNA trimer with each molecule binding to one PCNA monomer. PCNA stimulates the nuclease activity without altering cleavage specificity. The cofactor is Mg(2+). Phosphorylated. Phosphorylation upon DNA damage induces relocalization to the nuclear plasma.

It is found in the nucleus. The protein localises to the nucleolus. It localises to the nucleoplasm. The protein resides in the mitochondrion. In terms of biological role, structure-specific nuclease with 5'-flap endonuclease and 5'-3' exonuclease activities involved in DNA replication and repair. During DNA replication, cleaves the 5'-overhanging flap structure that is generated by displacement synthesis when DNA polymerase encounters the 5'-end of a downstream Okazaki fragment. It enters the flap from the 5'-end and then tracks to cleave the flap base, leaving a nick for ligation. Also involved in the long patch base excision repair (LP-BER) pathway, by cleaving within the apurinic/apyrimidinic (AP) site-terminated flap. Acts as a genome stabilization factor that prevents flaps from equilibrating into structures that lead to duplications and deletions. Also possesses 5'-3' exonuclease activity on nicked or gapped double-stranded DNA, and exhibits RNase H activity. Also involved in replication and repair of rDNA and in repairing mitochondrial DNA. The polypeptide is Flap endonuclease 1 (Drosophila grimshawi (Hawaiian fruit fly)).